Reading from the N-terminus, the 1380-residue chain is DNA-directed RNA polymerase subunit beta (1380 aa).

Belongs to the RNA polymerase beta chain family. As to quaternary structure, the RNAP catalytic core consists of 2 alpha, 1 beta, 1 beta' and 1 omega subunit. When a sigma factor is associated with the core the holoenzyme is formed, which can initiate transcription.

The catalysed reaction is RNA(n) + a ribonucleoside 5'-triphosphate = RNA(n+1) + diphosphate. Functionally, DNA-dependent RNA polymerase catalyzes the transcription of DNA into RNA using the four ribonucleoside triphosphates as substrates. The polypeptide is DNA-directed RNA polymerase subunit beta (Ehrlichia ruminantium (strain Gardel)).